We begin with the raw amino-acid sequence, 1418 residues long: Sterol 3-beta-glucosyltransferase (1418 aa).

The segment covering 1-16 (MRPFLDDAKRRVDRKL) has biased composition (basic and acidic residues). Disordered stretches follow at residues 1–59 (MRPF…SREG), 83–188 (ARFD…RSAT), and 207–233 (LKASSTERSQPSLDESGEKGPRGASVS). A compositionally biased stretch (polar residues) spans 18-28 (ASRQSLSTSRL). 2 stretches are compositionally biased toward basic and acidic residues: residues 35–44 (DRLKDNHDAQ) and 95–105 (SEQRPRKESSV). Over residues 106–115 (RKGTSASANT) the composition is skewed to polar residues. Low complexity predominate over residues 116-126 (SSPLDSSQRSS). 2 stretches are compositionally biased toward basic and acidic residues: residues 127 to 139 (SRTDGKSEKESGT) and 147 to 166 (TISDHKLFRPFESNSKHEPQ). The span at 209–219 (ASSTERSQPSL) shows a compositional bias: polar residues. The region spanning 249-288 (EKVLVEYACSLLQSILLQGYMYVTEGHICFYAYLPKKSTV) is the GRAM 1 domain. The PH domain maps to 289 to 387 (AIKSGYLYKR…WVKALQKVIF (99 aa)). A disordered region spans residues 462-651 (ISSQHLSPQP…DPTKSFSGAP (190 aa)). A compositionally biased stretch (polar residues) spans 486 to 497 (RWSLTSGTSRVL). Low complexity predominate over residues 508–519 (ASASTSHTSLAH). Over residues 534–575 (SESILNSFEQGTESSAAWQSMTDAAESASQILNRSDVFQSPT) the composition is skewed to polar residues. Positions 578–598 (GLDRRPSGGERRGRRNSDETA) are enriched in basic and acidic residues. Positions 599–612 (RSLSTRANVGTGQQ) are enriched in polar residues. The segment covering 615–633 (ELGRRMDGDTSGREARDST) has biased composition (basic and acidic residues). Over residues 635–651 (ESDQYTQDPTKSFSGAP) the composition is skewed to polar residues. The GRAM 2 domain maps to 733–799 (DRFRAHFALP…RDIENVEKEK (67 aa)). Residues serine 920, arginine 921, aspartate 923, alanine 1223, histidine 1225, histidine 1238, glycine 1242, threonine 1243, aspartate 1262, and glutamine 1263 each contribute to the UDP-alpha-D-glucose site. A disordered region spans residues 1339 to 1418 (SIASSTPFSP…SGPGRKLSGR (80 aa)). Positions 1341 to 1355 (ASSTPFSPTPSAKTT) are enriched in low complexity. Acidic residues predominate over residues 1358–1379 (QDADDDVEDSEEWTFVGDDTDM). Residues 1380–1391 (EMSRRLRDRAIS) show a composition bias toward basic and acidic residues.

This sequence belongs to the glycosyltransferase 28 family.

Its subcellular location is the cytoplasm. The protein resides in the preautophagosomal structure membrane. The enzyme catalyses a sterol + UDP-alpha-D-glucose = a sterol 3-beta-D-glucoside + UDP + H(+). It catalyses the reaction ergosterol + UDP-alpha-D-glucose = ergosteryl 3-beta-D-glucoside + UDP + H(+). In terms of biological role, sterol glycosyltransferase responsible for the glycosylation of ergosterol to form ergosterol-glucoside. The sequence is that of Sterol 3-beta-glucosyltransferase from Neosartorya fischeri (strain ATCC 1020 / DSM 3700 / CBS 544.65 / FGSC A1164 / JCM 1740 / NRRL 181 / WB 181) (Aspergillus fischerianus).